We begin with the raw amino-acid sequence, 208 residues long: Uridine kinase (208 aa).

An ATP-binding site is contributed by glycine 12–threonine 19.

It belongs to the uridine kinase family.

It is found in the cytoplasm. It catalyses the reaction uridine + ATP = UMP + ADP + H(+). The catalysed reaction is cytidine + ATP = CMP + ADP + H(+). Its pathway is pyrimidine metabolism; CTP biosynthesis via salvage pathway; CTP from cytidine: step 1/3. It functions in the pathway pyrimidine metabolism; UMP biosynthesis via salvage pathway; UMP from uridine: step 1/1. In Streptococcus pyogenes serotype M18 (strain MGAS8232), this protein is Uridine kinase.